Here is a 603-residue protein sequence, read N- to C-terminus: Pentatricopeptide repeat-containing protein At2g02980, chloroplastic (603 aa).

Residues Met1–Lys38 constitute a chloroplast transit peptide. 10 PPR repeats span residues Asp93 to Pro127, Asp128 to Asp162, Asn163 to Pro193, Cys194 to Pro228, Asn229 to Lys263, Tyr264 to Lys294, Asp295 to Pro329, Asp330 to Pro365, Ser366 to Met400, and His432 to Lys466. Residues Leu401–Asn476 form a type E motif region. The type E(+) motif stretch occupies residues Asn477–Lys507. A type DYW motif region spans residues Leu508–Trp603.

Belongs to the PPR family. PCMP-H subfamily.

Its subcellular location is the plastid. The protein resides in the chloroplast. Functionally, involved in RNA editing event in chloroplasts. Required for the editing of a single site in ndhD transcript, which is a plastid-encoded subunits of the chloroplast NAD(P)H dehydrogenase (NDH) complex. Not essential for the activity of the NDH complex of the photosynthetic electron transport chain. In Arabidopsis thaliana (Mouse-ear cress), this protein is Pentatricopeptide repeat-containing protein At2g02980, chloroplastic (PCMP-H26).